A 317-amino-acid polypeptide reads, in one-letter code: mRNA 3'-end-processing protein yth-1 (317 aa).

A disordered region spans residues 1–20 (MATTTQTTTNSLPSGAGGPQ). C3H1-type zinc fingers lie at residues 51-78 (PADR…HVTA), 93-120 (GFGS…HEYN), 121-149 (LRKM…HIDP), 150-177 (LSRL…HFRR), and 179-202 (LCLY…HPRW). Positions 202–217 (WTADKDMEKPRAKGEG) are enriched in basic and acidic residues. Residues 202-317 (WTADKDMEKP…GRGGFRGKGH (116 aa)) are disordered. The segment covering 223-237 (QQQQQQQQQQHMGDA) has biased composition (low complexity). Residues 253–288 (YMDRERERDRDNREREMMMQGRDRDGGGHDRHKDRF) are compositionally biased toward basic and acidic residues. Gly residues predominate over residues 289–301 (GGGGGGGGGGRGR). Basic residues predominate over residues 302–317 (GGWRGRGRGGFRGKGH).

Belongs to the CPSF4/YTH1 family.

The protein localises to the nucleus. Its function is as follows. Component of the cleavage factor I (CF I) involved in pre-mRNA 3'-end processing. This Neurospora crassa (strain ATCC 24698 / 74-OR23-1A / CBS 708.71 / DSM 1257 / FGSC 987) protein is mRNA 3'-end-processing protein yth-1 (yth-1).